The following is a 357-amino-acid chain: DNA replication and repair protein RecF (357 aa).

30–37 (GANGSGKT) contacts ATP.

This sequence belongs to the RecF family.

The protein resides in the cytoplasm. Functionally, the RecF protein is involved in DNA metabolism; it is required for DNA replication and normal SOS inducibility. RecF binds preferentially to single-stranded, linear DNA. It also seems to bind ATP. In Klebsiella pneumoniae subsp. pneumoniae (strain ATCC 700721 / MGH 78578), this protein is DNA replication and repair protein RecF.